The sequence spans 178 residues: Prion-like protein doppel (178 aa).

An N-terminal signal peptide occupies residues 1–25; sequence MRKHLGGCWLAIVCILLFSQLCSVK. Positions 27–50 are flexible tail; it reads RGIKHRIKWNRKVLPSTSQVTEAR. Positions 51-154 are globular; it reads TAEIRPGAFI…KHCDFWLERG (104 aa). Cystine bridges form between Cys94–Cys147 and Cys108–Cys142. Asn98 and Asn110 each carry an N-linked (GlcNAc...) asparagine glycan. The segment at 124–141 is cu(2+) binding; it reads KQDNKLYQRVLWQLIREL. The GPI-anchor amidated glycine moiety is linked to residue Gly154. The propeptide at 155 to 178 is removed in mature form; that stretch reads AGLRVTLDQPMMLCLLVFIWFIVK.

Belongs to the prion family. Post-translationally, N-glycosylated. O-glycosylated. In terms of tissue distribution, strongly expressed in testis. Detected at low levels in ovary, spleen, kidney and mammary gland.

It is found in the cell membrane. Required for normal acrosome reaction and for normal male fertility. Can bind Cu(2+). This is Prion-like protein doppel (PRND) from Bos taurus (Bovine).